We begin with the raw amino-acid sequence, 1098 residues long: MICGLILSRLVGPGCEKGGRAFFPCDPYASPFPSIKGLQLHNAQLFVQNFQNPNTPYSRLLLNWQTGTGKSIAAIAIARQFMNHYMNFIENAPWIFVVGFTRTIIQTEMLRRPELGFVSYKEVAELHRLLHIAKQSGSTTSVESRHLNGFISTLKRRLTDRNRGGFFQFYGYKEFASKLFNITSKGEEKNFDVLSLFHRSDEAEDTLNENDISQFVQKISEAETNGLIRVNQKIMEQLRGGLLIADEIHNVYNIQERNNYGIALQYVLDAFPPHQAPRAVFMSATPVTGSVMEYVDLLNLLVPRHELPNGQPLQRQQLFDNSGHSVKWKKDALALVERLSIGRVSFLLDTNTNFYPERIFAGKMLSYRDEKLPYLHFIECPMSNYQLETLKQLGPDPKISSNAYSIYDMVFPNPKFSKQTEPKAYGLFNSTETPAALSMASTDWLLENGVQIIEPSRRTPFNVSGSFLSLQPPTHISGLAFYSGKYTQMMKDILSIIREGRGKILIYHNRVRMSGVLILQEILQSNGILNEVSSPVGTTRCSICAAIRDDHTHSDHQFIPVRFTILHSEIEPAVRERSLALFNASSNLEGHQLRILIGSKVIVEGLNFQAVRYEMIMSLPLDIPRLIQVFGRVVRKNSHMELPPNERNVTIYLYVSTTPDGGPELAKYAQKLKEYILIQEGDKALRKHAIDGFTNQIKIDKPMLESLPLSPSITPANVGATVLNTFEAYGYGEQEVKTISNIIISLFMARPVWTYSELWKAVSTPKLIQGITIDNKLFSEDNFALALISLCYSKNQCKELLIQNRLCTIMHVPAKPEHLYIAAVLNHKKEPVLDIETYIRDFQPPTMHSVRITKYLEHSQTKEPFQVLYEKFQKDFQDEPIEQVLIHYPASFHYTMLEALIIDNLAGMGALVEVYKKFFIAFSKKDIQPFPDIFKIISHVPGDDNTLVGYATEDSVRLITSRKDKTWHEIPLYMLNINVKRKENDIVIGYMESKGKALKFKIRPPIQVLKKNEITDIRMLNRGAVCETRGREEQQKIANQLGISLNLTKISAIKLCLLIRNNLLQKEMEARNQPNGMQDGIRWFYLFNDKMPSLVHTS.

Residues 17-317 (KGGRAFFPCD…PNGQPLQRQQ (301 aa)) enclose the Helicase ATP-binding domain. 64–71 (WQTGTGKS) is a binding site for ATP. A DEAH box motif is present at residues 246–249 (DEIH). A Helicase C-terminal domain is found at 489–689 (MMKDILSIIR…EGDKALRKHA (201 aa)).

It belongs to the DEAD box helicase family. DEAH subfamily.

The protein resides in the virion. It catalyses the reaction ATP + H2O = ADP + phosphate + H(+). Functionally, putative initation factor. The polypeptide is Early transcription factor large subunit homolog (African swine fever virus (isolate Tick/Malawi/Lil 20-1/1983) (ASFV)).